An 80-amino-acid polypeptide reads, in one-letter code: Cell division activator CedA (80 aa).

It belongs to the CedA family.

Its function is as follows. Activates the cell division inhibited by chromosomal DNA over-replication. This is Cell division activator CedA from Escherichia coli O139:H28 (strain E24377A / ETEC).